A 596-amino-acid polypeptide reads, in one-letter code: MRLLKFVCLLASVAAAKPTPGASHKVIEHLDFVPEGWQMVGAADPAAIIDFWLAIERENPEKLYDTIYDVSTPGRAQYGKHLKREELDDLLRPRAETSESIINWLTNGGVNPQHIRDEGDWVRFSTNVKTAETLMNTRFNVFKDNLNSVSKIRTLEYSVPVAISAHVQMIQPTTLFGRQKPQNSLILNPLTKDLESMSVEEFAASQCRSLVTTACLRELYGLGDRVTQARDDNRIGVSGFLEEYAQYRDLELFLSRFEPSAKGFNFSEGLIAGGKNTQGGPGSSTEANLDMQYVVGLSHKAKVTYYSTAGRGPLIPDLSQPSQASNNNEPYLEQLRYLVKLPKNQLPSVLTTSYGDTEQSLPASYTKATCDLFAQLGTMGVSVIFSSGDTGPGSSCQTNDGKNATRFNPIYPASCPFVTSIGGTVGTGPERAVSFSSGGFSDRFPRPQYQDNAVKDYLKILGNQWSGLFDPNGRAFPDIAAQGSNYAVYDKGRMTGVSGTSASAPAMAAIIAQLNDFRLAKGSPVLGFLNPWIYSKGFSGFTDIVDGGSRGCTGYDIYSGLKAKKVPYASWNATKGWDPVTGFGTPNFQALTKVLP.

Positions 1 to 16 (MRLLKFVCLLASVAAA) are cleaved as a signal peptide. Residues 17–203 (KPTPGASHKV…LESMSVEEFA (187 aa)) constitute a propeptide, removed in mature form. Residues 210–596 (LVTTACLREL…NFQALTKVLP (387 aa)) form the Peptidase S53 domain. A glycan (N-linked (GlcNAc...) asparagine) is linked at Asn-265. Residues Glu-286 and Asp-290 each act as charge relay system in the active site. An N-linked (GlcNAc...) asparagine glycan is attached at Asn-403. The active-site Charge relay system is the Ser-501. Ca(2+) is bound by residues Asp-543 and Ile-544. Asn-572 is a glycosylation site (N-linked (GlcNAc...) asparagine). Ca(2+) is bound by residues Gly-576 and Asp-578.

Requires Ca(2+) as cofactor.

It localises to the secreted. The protein localises to the extracellular space. The enzyme catalyses Release of an N-terminal tripeptide from a polypeptide.. Its function is as follows. Secreted tripeptidyl-peptidase which degrades proteins at acidic pHs and is involved in virulence. The chain is Probable tripeptidyl-peptidase SED2 (SED2) from Arthroderma benhamiae (strain ATCC MYA-4681 / CBS 112371) (Trichophyton mentagrophytes).